The chain runs to 680 residues: Anosmin-1 (680 aa).

Residues 1-24 (MVPGVPGAVLTLCLWLAASSGCLA) form the signal peptide. 5 disulfide bridges follow: cysteine 49–cysteine 83, cysteine 53–cysteine 77, cysteine 86–cysteine 105, cysteine 90–cysteine 101, and cysteine 116–cysteine 120. The N-linked (GlcNAc...) asparagine glycan is linked to asparagine 71. The WAP domain maps to 127-176 (LLVKQGDCPAPEKASGFAAACVESCEVDNECSGVKKCCSNGCGHTCQVPK). Fibronectin type-III domains follow at residues 186–287 (PRKE…SKDP), 292–400 (APAN…THAT), 425–523 (PTRP…TPPC), and 550–658 (KPEN…LPPS). N-linked (GlcNAc...) asparagine glycans are attached at residues asparagine 209, asparagine 300, asparagine 470, asparagine 553, and asparagine 564. Residues 642–680 (EGPATIKTFRTPELPPSSAHRSHLKHRHPHHYKPSPERY) are disordered. A compositionally biased stretch (basic residues) spans 661–674 (HRSHLKHRHPHHYK).

As to quaternary structure, interacts with FGFR1; this interaction does not interfere with FGF2-binding to FGFR1. Binds heparin. Heparin may promote or interfere with ANOS1-FGFR1-FGF2 complex formation depending on the sequential order of its binding to the various constituents. For instance, heparin-ANOS1 interaction favors subsequent binding to pre-existing binary FGFR1-FGF2 complex, while heparin-FGF2 complex does not interact with ANOS1-FGFR1. In terms of processing, N-glycosylated. Post-translationally, may be proteolytically cleaved at the cell surface and released from the cell surface. In terms of tissue distribution, expressed in the cerebellum (at protein level).

It is found in the cell membrane. It localises to the secreted. Functionally, has a dual branch-promoting and guidance activity, which may play an important role in the patterning of mitral and tufted cell collaterals to the olfactory cortex. Chemoattractant for fetal olfactory epithelial cells. The sequence is that of Anosmin-1 from Homo sapiens (Human).